We begin with the raw amino-acid sequence, 157 residues long: Protein NrdI (157 aa).

The protein belongs to the NrdI family.

In terms of biological role, probably involved in ribonucleotide reductase function. This is Protein NrdI from Mycoplasma mycoides subsp. mycoides SC (strain CCUG 32753 / NCTC 10114 / PG1).